Reading from the N-terminus, the 88-residue chain is MLATEKKQEIINNFKKHEGDTGSPEVQIAILTARIVYLTDHFKIHKKDHHSRRGLLKLVGQRRRMLDYLKSRDLDRYKKVIEQLGIRR.

The protein belongs to the universal ribosomal protein uS15 family. In terms of assembly, part of the 30S ribosomal subunit. Forms a bridge to the 50S subunit in the 70S ribosome, contacting the 23S rRNA.

Its function is as follows. One of the primary rRNA binding proteins, it binds directly to 16S rRNA where it helps nucleate assembly of the platform of the 30S subunit by binding and bridging several RNA helices of the 16S rRNA. In terms of biological role, forms an intersubunit bridge (bridge B4) with the 23S rRNA of the 50S subunit in the ribosome. In Trichlorobacter lovleyi (strain ATCC BAA-1151 / DSM 17278 / SZ) (Geobacter lovleyi), this protein is Small ribosomal subunit protein uS15.